The primary structure comprises 210 residues: Thymidylate kinase (210 aa).

13–20 (GLEGAGKS) contributes to the ATP binding site.

The protein belongs to the thymidylate kinase family.

The catalysed reaction is dTMP + ATP = dTDP + ADP. Functionally, phosphorylation of dTMP to form dTDP in both de novo and salvage pathways of dTTP synthesis. This chain is Thymidylate kinase, found in Shewanella loihica (strain ATCC BAA-1088 / PV-4).